Consider the following 763-residue polypeptide: Formin-like protein 4 (763 aa).

Positions 1-33 are cleaved as a signal peptide; that stretch reads MAAMLMQPWPPFLPHLTLVFLTLILFFPNQSFS. A disordered region spans residues 52–73; the sequence is PPVQSPVLSPPQNPSSSSSDSD. A helical membrane pass occupies residues 80-100; it reads AVLITAASTLLVAAVFFFLVH. 2 disordered regions span residues 185 to 327 and 726 to 763; these read IYSK…DSDH and RSSM…DSDM. The segment covering 205–225 has biased composition (polar residues); sequence RSSTSHSVIHNDNYRNATTTH. Basic and acidic residues predominate over residues 229–238; it reads VKTDSFEFVK. Residues 240 to 280 are compositionally biased toward pro residues; that stretch reads DPTPPPPPPPPIPVKQSATPPPPPPPKLKNNGPSPPPPPPL. Low complexity predominate over residues 281–292; the sequence is KKTAALSSSASK. In terms of domain architecture, FH2 spans 303–738; the sequence is SGESSNGQVK…MGSTQQRNAV (436 aa). Residues 316–327 show a composition bias toward basic and acidic residues; that stretch reads LHWDKVNPDSDH. Residues 726-736 show a composition bias toward polar residues; that stretch reads RSSMGSTQQRN.

Belongs to the formin-like family. Class-I subfamily. In terms of assembly, interacts with profilin. In terms of tissue distribution, expressed in the whole plant (at protein level).

It is found in the cell membrane. In terms of biological role, might be involved in the organization and polarity of the actin cytoskeleton. The protein is Formin-like protein 4 (FH4) of Arabidopsis thaliana (Mouse-ear cress).